We begin with the raw amino-acid sequence, 88 residues long: Sec-independent protein translocase protein TatA (88 aa).

The helical transmembrane segment at 1–21 threads the bilayer; that stretch reads MGSIGWAQLLIIAVIVVLLFG. Residues 41-88 are disordered; sequence KAMGDDSQTPPTNVDKTSNDADFAKSITEKQQPVAKAEESKSHEKEQG. Residues 46-56 show a composition bias toward polar residues; sequence DSQTPPTNVDK. The span at 76 to 88 shows a compositional bias: basic and acidic residues; sequence KAEESKSHEKEQG.

Belongs to the TatA/E family. In terms of assembly, the Tat system comprises two distinct complexes: a TatABC complex, containing multiple copies of TatA, TatB and TatC subunits, and a separate TatA complex, containing only TatA subunits. Substrates initially bind to the TatABC complex, which probably triggers association of the separate TatA complex to form the active translocon.

It localises to the cell inner membrane. Functionally, part of the twin-arginine translocation (Tat) system that transports large folded proteins containing a characteristic twin-arginine motif in their signal peptide across membranes. TatA could form the protein-conducting channel of the Tat system. This chain is Sec-independent protein translocase protein TatA, found in Yersinia pestis.